A 504-amino-acid polypeptide reads, in one-letter code: UDP-N-acetylmuramoylalanine--D-glutamate ligase (504 aa).

129–135 (GTNGKTT) is an ATP binding site.

Belongs to the MurCDEF family.

It localises to the cytoplasm. The enzyme catalyses UDP-N-acetyl-alpha-D-muramoyl-L-alanine + D-glutamate + ATP = UDP-N-acetyl-alpha-D-muramoyl-L-alanyl-D-glutamate + ADP + phosphate + H(+). It functions in the pathway cell wall biogenesis; peptidoglycan biosynthesis. Cell wall formation. Catalyzes the addition of glutamate to the nucleotide precursor UDP-N-acetylmuramoyl-L-alanine (UMA). This Burkholderia mallei (strain NCTC 10247) protein is UDP-N-acetylmuramoylalanine--D-glutamate ligase.